Consider the following 474-residue polypeptide: 3-isopropylmalate dehydratase large subunit (474 aa).

3 residues coordinate [4Fe-4S] cluster: C350, C415, and C418.

It belongs to the aconitase/IPM isomerase family. LeuC type 1 subfamily. As to quaternary structure, heterodimer of LeuC and LeuD. Requires [4Fe-4S] cluster as cofactor.

The catalysed reaction is (2R,3S)-3-isopropylmalate = (2S)-2-isopropylmalate. Its pathway is amino-acid biosynthesis; L-leucine biosynthesis; L-leucine from 3-methyl-2-oxobutanoate: step 2/4. Functionally, catalyzes the isomerization between 2-isopropylmalate and 3-isopropylmalate, via the formation of 2-isopropylmaleate. The polypeptide is 3-isopropylmalate dehydratase large subunit (Phenylobacterium zucineum (strain HLK1)).